The primary structure comprises 239 residues: UPF0173 metal-dependent hydrolase DVU_3308 (239 aa).

The protein belongs to the UPF0173 family.

The chain is UPF0173 metal-dependent hydrolase DVU_3308 from Nitratidesulfovibrio vulgaris (strain ATCC 29579 / DSM 644 / CCUG 34227 / NCIMB 8303 / VKM B-1760 / Hildenborough) (Desulfovibrio vulgaris).